The chain runs to 134 residues: MTNIRKTHPLLKIINNSLVDLPAPSSLTSWWNFGSLLGVCLGVQILTGLFLAMHYTSDTATAFNSVTHICRDVNYGWLLRYLHANGASMFFICLYLHVGRGLYYGSYTYSETWNIGILLLFAVMATDFMGYVLP.

The next 3 membrane-spanning stretches (helical) occupy residues 33–53, 77–98, and 113–133; these read FGSL…FLAM, WLLR…YLHV, and WNIG…GYVL. 2 residues coordinate heme b: histidine 83 and histidine 97.

It belongs to the cytochrome b family. As to quaternary structure, the cytochrome bc1 complex contains 11 subunits: 3 respiratory subunits (MT-CYB, CYC1 and UQCRFS1), 2 core proteins (UQCRC1 and UQCRC2) and 6 low-molecular weight proteins (UQCRH/QCR6, UQCRB/QCR7, UQCRQ/QCR8, UQCR10/QCR9, UQCR11/QCR10 and a cleavage product of UQCRFS1). This cytochrome bc1 complex then forms a dimer. Requires heme b as cofactor.

The protein localises to the mitochondrion inner membrane. Its function is as follows. Component of the ubiquinol-cytochrome c reductase complex (complex III or cytochrome b-c1 complex) that is part of the mitochondrial respiratory chain. The b-c1 complex mediates electron transfer from ubiquinol to cytochrome c. Contributes to the generation of a proton gradient across the mitochondrial membrane that is then used for ATP synthesis. The polypeptide is Cytochrome b (MT-CYB) (Sturnira tildae (Tilda's yellow-shouldered bat)).